Reading from the N-terminus, the 122-residue chain is Large ribosomal subunit protein uL14 (122 aa).

It belongs to the universal ribosomal protein uL14 family. As to quaternary structure, part of the 50S ribosomal subunit. Forms a cluster with proteins L3 and L19. In the 70S ribosome, L14 and L19 interact and together make contacts with the 16S rRNA in bridges B5 and B8.

Functionally, binds to 23S rRNA. Forms part of two intersubunit bridges in the 70S ribosome. In Verminephrobacter eiseniae (strain EF01-2), this protein is Large ribosomal subunit protein uL14.